The following is a 378-amino-acid chain: Erythronate-4-phosphate dehydrogenase (378 aa).

S45 and T66 together coordinate substrate. NAD(+) is bound by residues D146 and T175. R208 is a catalytic residue. D232 is a binding site for NAD(+). The active site involves E237. H254 functions as the Proton donor in the catalytic mechanism. G257 serves as a coordination point for NAD(+). A substrate-binding site is contributed by Y258.

The protein belongs to the D-isomer specific 2-hydroxyacid dehydrogenase family. PdxB subfamily. As to quaternary structure, homodimer.

Its subcellular location is the cytoplasm. It carries out the reaction 4-phospho-D-erythronate + NAD(+) = (R)-3-hydroxy-2-oxo-4-phosphooxybutanoate + NADH + H(+). Its pathway is cofactor biosynthesis; pyridoxine 5'-phosphate biosynthesis; pyridoxine 5'-phosphate from D-erythrose 4-phosphate: step 2/5. Functionally, catalyzes the oxidation of erythronate-4-phosphate to 3-hydroxy-2-oxo-4-phosphonooxybutanoate. The chain is Erythronate-4-phosphate dehydrogenase from Escherichia coli O127:H6 (strain E2348/69 / EPEC).